The primary structure comprises 89 residues: Large ribosomal subunit protein bL27 (89 aa).

The protein belongs to the bacterial ribosomal protein bL27 family.

The sequence is that of Large ribosomal subunit protein bL27 from Cereibacter sphaeroides (strain ATCC 17029 / ATH 2.4.9) (Rhodobacter sphaeroides).